The following is a 995-amino-acid chain: Translation initiation factor IF-2 (995 aa).

Positions 53 to 399 (NNAGSPAPAA…SGAPRGQGQV (347 aa)) are disordered. 2 stretches are compositionally biased toward pro residues: residues 60 to 87 (PAAP…PPGG) and 104 to 119 (TPGP…PPQS). Positions 135–160 (AAAEARAAALKAEQEAAVKAAQAARQ) are enriched in low complexity. Residues 161–171 (QQRENVRREPP) are compositionally biased toward basic and acidic residues. Residues 177–192 (RPGPRPGPGTMPPRPG) show a composition bias toward pro residues. The segment covering 193–202 (SPAAGRSGAP) has biased composition (low complexity). Composition is skewed to pro residues over residues 203–213 (APGPGPRPGGR) and 242–264 (RPSP…PSPA). The span at 273–363 (RPGGPGSGRP…GAAGAFGRPG (91 aa)) shows a compositional bias: gly residues. The segment covering 367 to 376 (TRGRKSKKQR) has biased composition (basic residues). Residues 486 to 658 (SRPPVVTVMG…VLLTADASLE (173 aa)) form the tr-type G domain. A G1 region spans residues 495–502 (GHVDHGKT). 495–502 (GHVDHGKT) is a GTP binding site. Positions 520–524 (GITQH) are G2. Positions 545-548 (DTPG) are G3. GTP is bound by residues 545–549 (DTPGH) and 599–602 (NKID). The G4 stretch occupies residues 599 to 602 (NKID). A G5 region spans residues 635 to 637 (AAK).

Belongs to the TRAFAC class translation factor GTPase superfamily. Classic translation factor GTPase family. IF-2 subfamily.

It localises to the cytoplasm. One of the essential components for the initiation of protein synthesis. Protects formylmethionyl-tRNA from spontaneous hydrolysis and promotes its binding to the 30S ribosomal subunits. Also involved in the hydrolysis of GTP during the formation of the 70S ribosomal complex. The polypeptide is Translation initiation factor IF-2 (Salinispora arenicola (strain CNS-205)).